The chain runs to 399 residues: MSNKLVLVLNCGSSSLKFAVIDAQTGDDQISGLAECFGLEDSRIKWKINGEKHESSLGAFTAHREAVEFIVNKILAGQPELAAQIQAVGHRIVHGGEKFTRSVIIDEHVIKGIEECSSLAPLHNPAHLIGIRAAMASFPKLPQVAVFDTAFHQSMPERSFIYALPYKLYREHGIRRYGMHGTSHLFVSREAAKVLKKPLAETNVICAHLGNGASVTAVKGGKSVDTSMGLTPLEGLVMGTRCGDIDPSIIYHLVHQLGYTLEEVNNLMNKQSGLLGISELTNDCRGIEEGYADGHKGATLALEIFCYRLAKYIASYTVPLGRLDAVVFTGGIGENSDIIREKVLNMLQIFNFHVDSERNKAARFGKKGIITADNSTVAMVIPTNEEWVIAEDSIKLITK.

Asn-10 is a binding site for Mg(2+). Lys-17 lines the ATP pocket. Arg-91 serves as a coordination point for substrate. Asp-148 acts as the Proton donor/acceptor in catalysis. ATP is bound by residues His-208–Gly-212, Asp-283–Arg-285, and Gly-331–Asn-335. Position 385 (Glu-385) interacts with Mg(2+).

This sequence belongs to the acetokinase family. Homodimer. The cofactor is Mg(2+). It depends on Mn(2+) as a cofactor.

It is found in the cytoplasm. It carries out the reaction acetate + ATP = acetyl phosphate + ADP. The protein operates within metabolic intermediate biosynthesis; acetyl-CoA biosynthesis; acetyl-CoA from acetate: step 1/2. In terms of biological role, catalyzes the formation of acetyl phosphate from acetate and ATP. Can also catalyze the reverse reaction. The polypeptide is Acetate kinase (Shewanella oneidensis (strain ATCC 700550 / JCM 31522 / CIP 106686 / LMG 19005 / NCIMB 14063 / MR-1)).